The primary structure comprises 131 residues: Large ribosomal subunit protein bL17 (131 aa).

Belongs to the bacterial ribosomal protein bL17 family. In terms of assembly, part of the 50S ribosomal subunit. Contacts protein L32.

The polypeptide is Large ribosomal subunit protein bL17 (Polynucleobacter necessarius subsp. necessarius (strain STIR1)).